A 227-amino-acid chain; its full sequence is MAAQPLLRILCLAGFRQSERGFREKTGALRKALRGRAELVCLSGPHPVVDAAGSEGARPDSGPCPPEEQPQGWWFSEQEADVFLALEEPTACRGLEEALETVAQALNKLGPFDGILGFSQGAALAALVCALGQGGDPRFPLPRFVILVSGFCPRGLGLMEPIMQGPLSLPSLHVFGDTDGVIPSQESMQLCSRFDGAVTLTHSGGHFIPAAAPQRQAYLKFLDQFAD.

Residues S119, D179, and H206 each act as charge relay system in the active site.

It belongs to the LovG family.

The catalysed reaction is a carboxylic ester + H2O = an alcohol + a carboxylate + H(+). Exhibits ester hydrolase activity with a strong preference for long-chain alkyl ester substrates and high selectivity against a variety of short, branched, and substituted esters. Is able to hydrolyze ester bonds within a wide range of p-nitrophenyl derivatives (C2-C14) in vitro, with a strong preference toward substrates of &gt;8 carbons. The polypeptide is Esterase OVCA2 (OVCA2) (Bos taurus (Bovine)).